The chain runs to 98 residues: Feather keratin 2 (98 aa).

An N-acetylserine modification is found at serine 2.

This sequence belongs to the avian keratin family. The avian keratins (F-ker, S-ker, C-ker and B-ker) are a complex mixture of very similar polypeptides.

The polypeptide is Feather keratin 2 (Gallus gallus (Chicken)).